The chain runs to 305 residues: Dihydroorotate dehydrogenase B (NAD(+)), catalytic subunit (305 aa).

FMN contacts are provided by residues S21 and 45–46 (KG). Substrate is bound by residues K45 and 69 to 73 (NAVGL). FMN is bound by residues N99 and N127. Position 127 (N127) interacts with substrate. The active-site Nucleophile is the C130. Positions 165 and 191 each coordinate FMN. Residue 192 to 193 (NT) coordinates substrate. FMN contacts are provided by residues G217, 243 to 244 (GG), and 265 to 266 (GT).

The protein belongs to the dihydroorotate dehydrogenase family. Type 1 subfamily. As to quaternary structure, heterotetramer of 2 PyrK and 2 PyrD type B subunits. Requires FMN as cofactor.

It localises to the cytoplasm. It carries out the reaction (S)-dihydroorotate + NAD(+) = orotate + NADH + H(+). The protein operates within pyrimidine metabolism; UMP biosynthesis via de novo pathway; orotate from (S)-dihydroorotate (NAD(+) route): step 1/1. Catalyzes the conversion of dihydroorotate to orotate with NAD(+) as electron acceptor. The chain is Dihydroorotate dehydrogenase B (NAD(+)), catalytic subunit (pyrD) from Parabacteroides distasonis (strain ATCC 8503 / DSM 20701 / CIP 104284 / JCM 5825 / NCTC 11152).